Reading from the N-terminus, the 545-residue chain is Ribulokinase (545 aa).

Belongs to the ribulokinase family.

It carries out the reaction D-ribulose + ATP = D-ribulose 5-phosphate + ADP + H(+). The catalysed reaction is L-ribulose + ATP = L-ribulose 5-phosphate + ADP + H(+). Its pathway is carbohydrate degradation; L-arabinose degradation via L-ribulose; D-xylulose 5-phosphate from L-arabinose (bacterial route): step 2/3. The polypeptide is Ribulokinase (Staphylococcus aureus (strain Mu3 / ATCC 700698)).